A 125-amino-acid polypeptide reads, in one-letter code: Multifunctional methyltransferase subunit TRM112-like protein (125 aa).

The 120-residue stretch at 2–121 (KLFVHNFMSS…RDGIPNMLKV (120 aa)) folds into the TRM112 domain.

This sequence belongs to the TRM112 family.

The protein resides in the nucleus. It localises to the nucleoplasm. It is found in the cytoplasm. The protein localises to the perinuclear region. Its function is as follows. Acts as an activator of both RNA and protein methyltransferases. In Caenorhabditis elegans, this protein is Multifunctional methyltransferase subunit TRM112-like protein.